A 95-amino-acid polypeptide reads, in one-letter code: Integration host factor subunit beta (95 aa).

This sequence belongs to the bacterial histone-like protein family. Heterodimer of an alpha and a beta chain.

Functionally, this protein is one of the two subunits of integration host factor, a specific DNA-binding protein that functions in genetic recombination as well as in transcriptional and translational control. This is Integration host factor subunit beta from Psychromonas ingrahamii (strain DSM 17664 / CCUG 51855 / 37).